We begin with the raw amino-acid sequence, 428 residues long: Autophagy-related protein 14 (428 aa).

Positions 82–143 (QEAIDRTAEI…RKKQLDKVKD (62 aa)) form a coiled coil.

This sequence belongs to the ATG14 family. In terms of assembly, component of the autophagy-specific VPS34 PI3-kinase complex I.

It localises to the preautophagosomal structure membrane. It is found in the vacuole membrane. Its function is as follows. Required for cytoplasm to vacuole transport (Cvt) and autophagy as a part of the autophagy-specific VPS34 PI3-kinase complex I. This complex is essential to recruit the ATG8-phosphatidylinositol conjugate and the ATG12-ATG5 conjugate to the pre-autophagosomal structure. ATG14 mediates the specific binding of the VPS34 PI3-kinase complex I to the preautophagosomal structure (PAS). Plays a crucial role in hyphal development, conidiogenesis and pathogenicity. Also required for glycogen mobilization, quantity of lipid bodies, and the turgor pressure of appressoria. The polypeptide is Autophagy-related protein 14 (Pyricularia oryzae (strain 70-15 / ATCC MYA-4617 / FGSC 8958) (Rice blast fungus)).